We begin with the raw amino-acid sequence, 188 residues long: Archaetidylinositol phosphate synthase (188 aa).

A run of 2 helical transmembrane segments spans residues 20–40 (LASL…ITLL) and 51–71 (ILAG…GALA). Mg(2+)-binding residues include Asp64, Asp67, Asp85, and Asp89. Catalysis depends on Asp89, which acts as the Proton acceptor. A run of 2 helical transmembrane segments spans residues 96 to 116 (ILFG…LTLI) and 147 to 167 (IIII…YLVA).

This sequence belongs to the CDP-alcohol phosphatidyltransferase class-I family. It depends on Mn(2+) as a cofactor. Mg(2+) serves as cofactor.

The protein localises to the cell membrane. The catalysed reaction is CDP-2,3-bis-O-(phytanyl)-sn-glycerol + 1D-myo-inositol 3-phosphate = saturated 1-archaetidyl-1D-myo-inositol 3-phosphate + CMP + H(+). Its pathway is lipid metabolism; phospholipid metabolism. Functionally, catalyzes the formation of archaetidylinositol phosphate (AIP) from CDP-archaeol (CDP-ArOH or CDP-2,3-bis-(O-phytanyl)-sn-glycerol) and 1L-myo-inositol 1-phosphate (IP or 1D-myo-inositol 3-phosphate). AIP is a precursor of archaetidyl-myo-inositol (AI), an ether-type inositol phospholipid ubiquitously distributed in archaea membranes and essential for glycolipid biosynthesis in archaea. The polypeptide is Archaetidylinositol phosphate synthase (Pyrococcus horikoshii (strain ATCC 700860 / DSM 12428 / JCM 9974 / NBRC 100139 / OT-3)).